The sequence spans 61 residues: Large ribosomal subunit protein uL30 (61 aa).

This sequence belongs to the universal ribosomal protein uL30 family. Part of the 50S ribosomal subunit.

The polypeptide is Large ribosomal subunit protein uL30 (Parafrankia sp. (strain EAN1pec)).